A 327-amino-acid polypeptide reads, in one-letter code: Deoxyribonuclease (327 aa).

The segment at residues 1 to 24 is a signal peptide (or 35); the sequence is MSKKLRNFLVRIIVAAFASFAVMA. Positions 299–327 are disordered; that stretch reads DSTTDEIENSVDDSEEIVYNDTTTEEEEN.

It carries out the reaction Endonucleolytic cleavage to 5'-phosphodinucleotide and 5'-phosphooligonucleotide end-products.. In terms of biological role, may have a role in S.equisimilis virulence. This Streptococcus dysgalactiae subsp. equisimilis (Streptococcus equisimilis) protein is Deoxyribonuclease (sdc).